A 203-amino-acid polypeptide reads, in one-letter code: Ras-related protein Rab-7a (203 aa).

GTP contacts are provided by residues 15–22 (GDSGVGKT), 34–40 (SNQYKAT), 63–67 (DTAGQ), 125–128 (NKID), and 157–158 (AK). The Effector region motif lies at 37 to 45 (YKATIGADF). Residues cysteine 202 and cysteine 203 are each lipidated (S-geranylgeranyl cysteine).

Belongs to the small GTPase superfamily. Rab family.

The protein localises to the late endosome membrane. The protein resides in the lysosome membrane. It is found in the cytoplasmic vesicle. Its subcellular location is the autophagosome membrane. It localises to the lipid droplet. The catalysed reaction is GTP + H2O = GDP + phosphate + H(+). Its function is as follows. Small GTPase which cycles between active GTP-bound and inactive GDP-bound states. In its active state, binds to a variety of effector proteins playing a key role in the regulation of endo-lysosomal trafficking. Governs early-to-late endosomal maturation, microtubule minus-end as well as plus-end directed endosomal migration and positioning, and endosome-lysosome transport through different protein-protein interaction cascades. Involved in lipophagy, a cytosolic lipase-independent autophagic pathway. The sequence is that of Ras-related protein Rab-7a (rab7A) from Dictyostelium discoideum (Social amoeba).